Reading from the N-terminus, the 407-residue chain is Phosphopentomutase (407 aa).

Positions 10, 306, 311, 347, 348, and 359 each coordinate Mn(2+).

This sequence belongs to the phosphopentomutase family. Requires Mn(2+) as cofactor.

The protein resides in the cytoplasm. It catalyses the reaction 2-deoxy-alpha-D-ribose 1-phosphate = 2-deoxy-D-ribose 5-phosphate. The enzyme catalyses alpha-D-ribose 1-phosphate = D-ribose 5-phosphate. Its pathway is carbohydrate degradation; 2-deoxy-D-ribose 1-phosphate degradation; D-glyceraldehyde 3-phosphate and acetaldehyde from 2-deoxy-alpha-D-ribose 1-phosphate: step 1/2. In terms of biological role, isomerase that catalyzes the conversion of deoxy-ribose 1-phosphate (dRib-1-P) and ribose 1-phosphate (Rib-1-P) to deoxy-ribose 5-phosphate (dRib-5-P) and ribose 5-phosphate (Rib-5-P), respectively. The chain is Phosphopentomutase from Pectobacterium atrosepticum (strain SCRI 1043 / ATCC BAA-672) (Erwinia carotovora subsp. atroseptica).